Consider the following 199-residue polypeptide: Fe/S biogenesis protein NfuA (199 aa).

[4Fe-4S] cluster contacts are provided by C156 and C159.

The protein belongs to the NfuA family. As to quaternary structure, homodimer. [4Fe-4S] cluster is required as a cofactor.

In terms of biological role, involved in iron-sulfur cluster biogenesis. Binds a 4Fe-4S cluster, can transfer this cluster to apoproteins, and thereby intervenes in the maturation of Fe/S proteins. Could also act as a scaffold/chaperone for damaged Fe/S proteins. The sequence is that of Fe/S biogenesis protein NfuA from Haemophilus ducreyi (strain 35000HP / ATCC 700724).